A 513-amino-acid chain; its full sequence is DNA damage-binding protein CMR1 (513 aa).

Residues 35–45 are compositionally biased toward basic and acidic residues; sequence RSEAGIEDHRK. The segment at 35–103 is disordered; that stretch reads RSEAGIEDHR…TAQNVKQEEE (69 aa). 6 WD repeats span residues 183–224, 237–277, 329–369, 386–425, 438–477, and 478–513; these read IVHE…PDPE, LFSR…SDEL, LSDK…AKPD, NSRLSVSAVSYAPIDHTLVCNGYDNTVRLFNARADLPSEL, GRWVSVLKARFKLNMDVFAIANMKRAIDIYTSRGEQLSHL, and ETSTVPAVVSWHPMQNWIVGGNNSGKVFLFTDAPQE.

This sequence belongs to the WD repeat DDB2/WDR76 family.

DNA-binding protein that binds to both single- and double-stranded DNA. Binds preferentially to UV-damaged DNA. May be involved in DNA-metabolic processes. This chain is DNA damage-binding protein CMR1, found in Eremothecium gossypii (strain ATCC 10895 / CBS 109.51 / FGSC 9923 / NRRL Y-1056) (Yeast).